A 627-amino-acid polypeptide reads, in one-letter code: Plasmepsin IX (627 aa).

At 1–13 (MFFINFKKIKKKQ) the chain is on the cytoplasmic side. A helical; Signal-anchor for type II membrane protein transmembrane segment spans residues 14-34 (FPIYLTQHRIITVFLIFIYFI). At 35-627 (NLKDCFHINN…SSLHNKINNL (593 aa)) the chain is on the lumenal side. The Peptidase A1 domain occupies 228–605 (YVGYIQIGTP…NNNSSYVGIA (378 aa)). Residues Asp246 and Asp495 contribute to the active site.

This sequence belongs to the peptidase A1 family. In terms of processing, autocleaved into a p55 mature form.

The protein localises to the membrane. The protein resides in the cytoplasmic vesicle. It localises to the secretory vesicle. It is found in the rhoptry. Its activity is regulated as follows. Inhibited by small molecule 49c. Inhibited by small molecule WM382. Its function is as follows. During the asexual blood stage, initiates the proteolytic maturation of several rhoptry proteins and thus, is required for merozoite invasion of host erythrocytes and probably the subsequent development of the ring-stage. Cleaves rhoptry associated protein 1 RAP1 and apical sushi protein ASP during schizont maturation. Also cleaves rhoptry protein RON3. The protein is Plasmepsin IX of Plasmodium falciparum (isolate 3D7).